We begin with the raw amino-acid sequence, 564 residues long: Excitatory amino acid transporter 4 (564 aa).

Topologically, residues 1-55 (MSSHGNSLFLRESGQRLGRVGWLQRLQESLQQRALRTRLRLQTMTREHVLRFLRR) are cytoplasmic. S2 is modified (phosphoserine). Transmembrane regions (helical) follow at residues 56–76 (NAFILLTVSAVVIGVSLAFAL), 99–119 (MLQMLVLPLIVSSLVTGMASL), and 133–153 (VYYMVTTVIAVFIGILMVTII). 3 N-linked (GlcNAc...) asparagine glycosylation sites follow: N216, N232, and N239. 3 helical membrane passes run 262 to 285 (SANGINALGLVVFSVAFGLVIGGV), 295 to 322 (FFDSLNEAIMRMVGIIIWYAPVGILFLI), and 344 to 365 (LTVIVGLFLHAGGVLPLIYFLI). Positions 371–401 (FPFIGGVLQALITAMGTSSSSATLPITFRCL) form an intramembrane region, discontinuously helical. 388-390 (SSS) serves as a coordination point for L-aspartate. A helical membrane pass occupies residues 411 to 437 (ITRFVLPVGATVNMDGTALYEALAAIF). 3 residues coordinate Na(+): G419, T421, and N423. L-aspartate-binding positions include T427, 468–472 (IPQAG), D501, and N508. Positions 451-484 (ITTISITATAASVGAAGIPQAGLVTMVIVLTSVG) form an intramembrane region, discontinuously helical. Residues 498–519 (WFLDRLRTMTNVLGDSIGAAVI) form a helical membrane-spanning segment. Na(+) contacts are provided by N508 and D512.

The protein belongs to the dicarboxylate/amino acid:cation symporter (DAACS) (TC 2.A.23) family. SLC1A6 subfamily. Homotrimer. In terms of tissue distribution, detected in brain, cerebellum and hippocampus.

The protein resides in the cell membrane. It catalyses the reaction K(+)(in) + L-glutamate(out) + 3 Na(+)(out) + H(+)(out) = K(+)(out) + L-glutamate(in) + 3 Na(+)(in) + H(+)(in). The catalysed reaction is K(+)(in) + L-aspartate(out) + 3 Na(+)(out) + H(+)(out) = K(+)(out) + L-aspartate(in) + 3 Na(+)(in) + H(+)(in). It carries out the reaction D-aspartate(out) + K(+)(in) + 3 Na(+)(out) + H(+)(out) = D-aspartate(in) + K(+)(out) + 3 Na(+)(in) + H(+)(in). In terms of biological role, sodium-dependent, high-affinity amino acid transporter that mediates the uptake of L-glutamate and also L-aspartate and D-aspartate. Functions as a symporter that transports one amino acid molecule together with two or three Na(+) ions and one proton, in parallel with the counter-transport of one K(+) ion. Mediates Cl(-) flux that is not coupled to amino acid transport; this avoids the accumulation of negative charges due to aspartate and Na(+) symport. Plays a redundant role in the rapid removal of released glutamate from the synaptic cleft, which is essential for terminating the postsynaptic action of glutamate. The polypeptide is Excitatory amino acid transporter 4 (SLC1A6) (Canis lupus familiaris (Dog)).